The sequence spans 414 residues: Succinylornithine transaminase (414 aa).

N6-(pyridoxal phosphate)lysine is present on lysine 260.

Belongs to the class-III pyridoxal-phosphate-dependent aminotransferase family. AstC subfamily. The cofactor is pyridoxal 5'-phosphate.

It catalyses the reaction N(2)-succinyl-L-ornithine + 2-oxoglutarate = N-succinyl-L-glutamate 5-semialdehyde + L-glutamate. Its pathway is amino-acid degradation; L-arginine degradation via AST pathway; L-glutamate and succinate from L-arginine: step 3/5. Its function is as follows. Catalyzes the transamination of N(2)-succinylornithine and alpha-ketoglutarate into N(2)-succinylglutamate semialdehyde and glutamate. Can also act as an acetylornithine aminotransferase. The sequence is that of Succinylornithine transaminase from Yersinia enterocolitica serotype O:8 / biotype 1B (strain NCTC 13174 / 8081).